A 273-amino-acid chain; its full sequence is SPbeta prophage-derived uncharacterized protein YomF (273 aa).

Residues 119–149 (VIETLQGLIDEAEDTIIRMNERIAECERVTK) adopt a coiled-coil conformation.

This is SPbeta prophage-derived uncharacterized protein YomF (yomF) from Bacillus subtilis (strain 168).